A 610-amino-acid chain; its full sequence is Dihydroxy-acid dehydratase (610 aa).

Residue aspartate 81 coordinates Mg(2+). Cysteine 122 is a [2Fe-2S] cluster binding site. Positions 123 and 124 each coordinate Mg(2+). Position 124 is an N6-carboxylysine (lysine 124). Cysteine 196 provides a ligand contact to [2Fe-2S] cluster. Glutamate 492 lines the Mg(2+) pocket. Serine 518 functions as the Proton acceptor in the catalytic mechanism.

This sequence belongs to the IlvD/Edd family. In terms of assembly, homodimer. [2Fe-2S] cluster serves as cofactor. Requires Mg(2+) as cofactor.

It catalyses the reaction (2R)-2,3-dihydroxy-3-methylbutanoate = 3-methyl-2-oxobutanoate + H2O. The catalysed reaction is (2R,3R)-2,3-dihydroxy-3-methylpentanoate = (S)-3-methyl-2-oxopentanoate + H2O. It functions in the pathway amino-acid biosynthesis; L-isoleucine biosynthesis; L-isoleucine from 2-oxobutanoate: step 3/4. The protein operates within amino-acid biosynthesis; L-valine biosynthesis; L-valine from pyruvate: step 3/4. Functions in the biosynthesis of branched-chain amino acids. Catalyzes the dehydration of (2R,3R)-2,3-dihydroxy-3-methylpentanoate (2,3-dihydroxy-3-methylvalerate) into 2-oxo-3-methylpentanoate (2-oxo-3-methylvalerate) and of (2R)-2,3-dihydroxy-3-methylbutanoate (2,3-dihydroxyisovalerate) into 2-oxo-3-methylbutanoate (2-oxoisovalerate), the penultimate precursor to L-isoleucine and L-valine, respectively. This is Dihydroxy-acid dehydratase from Ruegeria pomeroyi (strain ATCC 700808 / DSM 15171 / DSS-3) (Silicibacter pomeroyi).